Consider the following 349-residue polypeptide: Bifunctional protein FolKE (349 aa).

Residues 1 to 226 (MQTTYLSMGS…LFEIDSSKTD (226 aa)) are 2-amino-4-hydroxy-6-hydroxymethyldihydropteridine pyrophosphokinase. The segment at 226–349 (DSIVLIKDIP…KRMEFLESLL (124 aa)) is GTP cyclohydrolase 1.

In the N-terminal section; belongs to the HPPK family. It in the C-terminal section; belongs to the GTP cyclohydrolase I family. In terms of assembly, homomer.

It catalyses the reaction 6-hydroxymethyl-7,8-dihydropterin + ATP = (7,8-dihydropterin-6-yl)methyl diphosphate + AMP + H(+). It carries out the reaction GTP + H2O = 7,8-dihydroneopterin 3'-triphosphate + formate + H(+). Its pathway is cofactor biosynthesis; 7,8-dihydroneopterin triphosphate biosynthesis; 7,8-dihydroneopterin triphosphate from GTP: step 1/1. It functions in the pathway cofactor biosynthesis; tetrahydrofolate biosynthesis; 2-amino-4-hydroxy-6-hydroxymethyl-7,8-dihydropteridine diphosphate from 7,8-dihydroneopterin triphosphate: step 4/4. The protein is Bifunctional protein FolKE (folKE) of Lactococcus lactis subsp. lactis (strain IL1403) (Streptococcus lactis).